Consider the following 377-residue polypeptide: Compound eye opsin BCRH1 (377 aa).

At 1–53 (MANVTGPQMAFYGSGAATFGYPEGMTVADFVPDRVKHMVLDHWYNYPPVNPMW) the chain is on the extracellular side. An N-linked (GlcNAc...) asparagine glycan is attached at Asn3. Residues 54–78 (HYLLGVVYLFLGVISIAGNGLVIYL) form a helical membrane-spanning segment. Over 79 to 90 (YMKSQALKTPAN) the chain is Cytoplasmic. The chain crosses the membrane as a helical span at residues 91–115 (MLIVNLALSDLIMLTTNFPPFCYNC). Over 116-131 (FSGGRWMFSGTYCEIY) the chain is Extracellular. An intrachain disulfide couples Cys128 to Cys205. The chain crosses the membrane as a helical span at residues 132–151 (AALGAITGVCSIWTLCMISF). Topologically, residues 152–170 (DRYNIICNGFNGPKLTQGK) are cytoplasmic. The chain crosses the membrane as a helical span at residues 171 to 194 (ATFMCGLAWVISVGWSLPPFFGWG). The Extracellular segment spans residues 195-218 (SYTLEGILDSCSYDYFTRDMNTIT). A helical transmembrane segment spans residues 219-246 (YNICIFIFDFFLPASVIVFSYVFIVKAI). At 247-281 (FAHEAAMRAQAKKMNVTNLRSNEAETQRAEIRIAK) the chain is on the cytoplasmic side. The helical transmembrane segment at 282 to 305 (TALVNVSLWFICWTPYAAITIQGL) threads the bilayer. Over 306-313 (LGNAEGIT) the chain is Extracellular. A helical membrane pass occupies residues 314–338 (PLLTTLPALLAKSCSCYNPFVYAIS). N6-(retinylidene)lysine is present on Lys325. The Cytoplasmic segment spans residues 339–377 (HPKFRLAITQHLPWFCVHEKDPNDVEENQSSNTQTQEKS).

Belongs to the G-protein coupled receptor 1 family. Opsin subfamily. In terms of processing, phosphorylated on some or all of the serine and threonine residues present in the C-terminal region. As to expression, expressed in all of the seven retinular cells (R1-R7) forming the main rhabdom in each ommatidium.

Its subcellular location is the membrane. Its function is as follows. Visual pigments are the light-absorbing molecules that mediate vision. They consist of an apoprotein, opsin, covalently linked to cis-retinal. This opsin produces visual pigments with maximal absorption in the blue-green region of the spectrum. The protein is Compound eye opsin BCRH1 of Hemigrapsus sanguineus (Asian shore crab).